We begin with the raw amino-acid sequence, 211 residues long: tRNA (guanine-N(7)-)-methyltransferase (211 aa).

Residues Glu-43, Asp-68, Asn-95, and Asn-117 each contribute to the S-adenosyl-L-methionine site. A substrate-binding site is contributed by Lys-121. The interaction with RNA stretch occupies residues 123–128; that stretch reads RHNKRR. Residues Asp-153 and 190–193 contribute to the substrate site; that span reads TEYE.

This sequence belongs to the class I-like SAM-binding methyltransferase superfamily. TrmB family.

The enzyme catalyses guanosine(46) in tRNA + S-adenosyl-L-methionine = N(7)-methylguanosine(46) in tRNA + S-adenosyl-L-homocysteine. It participates in tRNA modification; N(7)-methylguanine-tRNA biosynthesis. Catalyzes the formation of N(7)-methylguanine at position 46 (m7G46) in tRNA. The sequence is that of tRNA (guanine-N(7)-)-methyltransferase from Clostridium tetani (strain Massachusetts / E88).